A 444-amino-acid polypeptide reads, in one-letter code: Tol-Pal system protein TolB (444 aa).

The signal sequence occupies residues M1–A19.

It belongs to the TolB family. As to quaternary structure, the Tol-Pal system is composed of five core proteins: the inner membrane proteins TolA, TolQ and TolR, the periplasmic protein TolB and the outer membrane protein Pal. They form a network linking the inner and outer membranes and the peptidoglycan layer.

Its subcellular location is the periplasm. In terms of biological role, part of the Tol-Pal system, which plays a role in outer membrane invagination during cell division and is important for maintaining outer membrane integrity. This chain is Tol-Pal system protein TolB, found in Rickettsia felis (strain ATCC VR-1525 / URRWXCal2) (Rickettsia azadi).